Reading from the N-terminus, the 270-residue chain is Putative tRNA (cytidine(32)/guanosine(34)-2'-O)-methyltransferase (270 aa).

Positions 53, 55, 78, 94, and 119 each coordinate S-adenosyl-L-methionine. Lys-159 serves as the catalytic Proton acceptor.

This sequence belongs to the class I-like SAM-binding methyltransferase superfamily. RNA methyltransferase RlmE family. TRM7 subfamily.

It is found in the cytoplasm. It catalyses the reaction cytidine(32)/guanosine(34) in tRNA + 2 S-adenosyl-L-methionine = 2'-O-methylcytidine(32)/2'-O-methylguanosine(34) in tRNA + 2 S-adenosyl-L-homocysteine + 2 H(+). Methylates the 2'-O-ribose of nucleotides at positions 32 and 34 of the tRNA anticodon loop of substrate tRNAs. This chain is Putative tRNA (cytidine(32)/guanosine(34)-2'-O)-methyltransferase (fsjA), found in Dictyostelium discoideum (Social amoeba).